The primary structure comprises 646 residues: Long-chain fatty acid transport protein 1 (646 aa).

At 1-13 the chain is on the extracellular side; that stretch reads MRTPGAGTASVAS. Residues 14 to 34 traverse the membrane as a helical segment; the sequence is LGLLWLLGLPWTWSAAAAFGV. The Cytoplasmic segment spans residues 35–646; sequence YVGSGGWRFL…ARICAGDFSL (612 aa). The tract at residues 191 to 475 is sufficient for oligomerization; it reads EVSEQLGKSL…YVSDSATNKK (285 aa). 246–257 is an AMP binding site; the sequence is YIYTSGTTGLPK.

This sequence belongs to the ATP-dependent AMP-binding enzyme family. Self-associates. May function as a homodimer. Interacts with EPRS1; mediates the translocation of SLC27A1 from the cytoplasm to the plasma membrane thereby increasing the uptake of long-chain fatty acids. Interacts with DGAT2 and this interaction is enhanced in the presence of ZFYVE1. Expressed in muscle.

The protein localises to the cell membrane. The protein resides in the endomembrane system. It is found in the cytoplasm. It catalyses the reaction a fatty acid(in) = a fatty acid(out). It carries out the reaction (9Z)-octadecenoate(out) = (9Z)-octadecenoate(in). The enzyme catalyses hexadecanoate(out) = hexadecanoate(in). The catalysed reaction is (5Z,8Z,11Z,14Z)-eicosatetraenoate(out) = (5Z,8Z,11Z,14Z)-eicosatetraenoate(in). It catalyses the reaction (9Z,12Z)-octadecadienoate(out) = (9Z,12Z)-octadecadienoate(in). It carries out the reaction a long-chain fatty acid + ATP + CoA = a long-chain fatty acyl-CoA + AMP + diphosphate. The enzyme catalyses (5Z,8Z,11Z,14Z)-eicosatetraenoate + ATP + CoA = (5Z,8Z,11Z,14Z)-eicosatetraenoyl-CoA + AMP + diphosphate. The catalysed reaction is a very long-chain fatty acid + ATP + CoA = a very long-chain fatty acyl-CoA + AMP + diphosphate. It catalyses the reaction tetracosanoate + ATP + CoA = tetracosanoyl-CoA + AMP + diphosphate. Its activity is regulated as follows. Inhibited by Triacsin C. Functionally, mediates the import of long-chain fatty acids (LCFA) into the cell by facilitating their transport at the plasma membrane. Also functions as an acyl-CoA ligase catalyzing the ATP-dependent formation of fatty acyl-CoA using LCFA and very-long-chain fatty acids (VLCFA) as substrates, which prevents fatty acid efflux from cells and might drive more fatty acid uptake. May act directly as a bona fide transporter, or alternatively, in a cytoplasmic or membrane-associated multimeric protein complex to trap and draw fatty acids towards accumulation. Plays a pivotal role in regulating available LCFA substrates from exogenous sources in tissues undergoing high levels of beta-oxidation or triglyceride synthesis. May be involved in regulation of cholesterol metabolism. Probably involved in fatty acid transport across the blood barrier. This chain is Long-chain fatty acid transport protein 1, found in Rattus norvegicus (Rat).